The sequence spans 549 residues: Glucose-6-phosphate isomerase (549 aa).

An N6-acetyllysine mark is found at Lys-80, Lys-228, and Lys-234. The active-site Proton donor is the Glu-355. Catalysis depends on residues His-386 and Lys-514.

This sequence belongs to the GPI family.

The protein localises to the cytoplasm. It catalyses the reaction alpha-D-glucose 6-phosphate = beta-D-fructose 6-phosphate. It participates in carbohydrate biosynthesis; gluconeogenesis. It functions in the pathway carbohydrate degradation; glycolysis; D-glyceraldehyde 3-phosphate and glycerone phosphate from D-glucose: step 2/4. In terms of biological role, catalyzes the reversible isomerization of glucose-6-phosphate to fructose-6-phosphate. The sequence is that of Glucose-6-phosphate isomerase from Escherichia coli O17:K52:H18 (strain UMN026 / ExPEC).